Reading from the N-terminus, the 340-residue chain is Anthranilate phosphoribosyltransferase (340 aa).

5-phospho-alpha-D-ribose 1-diphosphate contacts are provided by residues Gly-83, 86–87 (GD), Thr-91, 93–96 (NVST), 111–119 (KHGNRSVSS), and Ser-123. Position 83 (Gly-83) interacts with anthranilate. Ser-95 lines the Mg(2+) pocket. Position 114 (Asn-114) interacts with anthranilate. Residue Arg-169 coordinates anthranilate. Positions 228 and 229 each coordinate Mg(2+).

It belongs to the anthranilate phosphoribosyltransferase family. In terms of assembly, homodimer. The cofactor is Mg(2+).

The catalysed reaction is N-(5-phospho-beta-D-ribosyl)anthranilate + diphosphate = 5-phospho-alpha-D-ribose 1-diphosphate + anthranilate. The protein operates within amino-acid biosynthesis; L-tryptophan biosynthesis; L-tryptophan from chorismate: step 2/5. Catalyzes the transfer of the phosphoribosyl group of 5-phosphorylribose-1-pyrophosphate (PRPP) to anthranilate to yield N-(5'-phosphoribosyl)-anthranilate (PRA). This Aquifex aeolicus (strain VF5) protein is Anthranilate phosphoribosyltransferase.